Consider the following 538-residue polypeptide: Sucrose transport protein SUT1 (538 aa).

Residues 1-52 (MARGSGAGGGGGGGGGGLELSVGVGGGGGARGGGGGEAAAAVETAAPISLGR) lie on the Cytoplasmic side of the membrane. Residues 53 to 73 (LILSGMVAGGVQYGWALQLSL) traverse the membrane as a helical segment. Residues 74 to 81 (LTPYVQTL) are Extracellular-facing. Residues 82-102 (GLSHALTSFMWLCGPIAGMVV) form a helical membrane-spanning segment. At 103–123 (QPCVGLYSDRCTSKWGRRRPY) the chain is on the cytoplasmic side. Residues 124–144 (ILTGCVLICLAVVVIGFSADI) form a helical membrane-spanning segment. Over 145 to 162 (GYAMGDTKEDCSVYHGSR) the chain is Extracellular. The helical transmembrane segment at 163–183 (WHAAIVYVLGFWLLDFSNNTV) threads the bilayer. At 184–198 (QGPARALMADLSGRH) the chain is on the cytoplasmic side. Residues 199 to 219 (GPGTANSIFCSWMAMGNILGY) form a helical membrane-spanning segment. At 220-247 (SSGSTNNWHKWFPFLKTRACCEACANLK) the chain is on the extracellular side. Residues 248–268 (GAFLVAVIFLSLCLVITLIFA) form a helical membrane-spanning segment. Over 269–306 (KEVPFKGNAALPTKSNEPAEPEGTGPLAVLKGFRNLPT) the chain is Cytoplasmic. The helical transmembrane segment at 307 to 327 (GMPSVLIVTGLTWLSWFPFIL) threads the bilayer. Residues 328–357 (YDTDWMGREIYHGDPKGTDPQIEAFNQGVR) lie on the Extracellular side of the membrane. The chain crosses the membrane as a helical span at residues 358–378 (AGAFGLLLNSIVLGFSSFLIE). Topologically, residues 379–388 (PMCRKVGPRV) are cytoplasmic. The helical transmembrane segment at 389-409 (VWVTSNFLVCIAMAATALISF) threads the bilayer. The Extracellular portion of the chain corresponds to 410 to 433 (WSLKDFHGTVQKAITADKSIKAVC). Residues 434-454 (LVLFAFLGVPLAVLYSVPFAV) traverse the membrane as a helical segment. The Cytoplasmic portion of the chain corresponds to 455-470 (TAQLAATRGGGQGLCT). The chain crosses the membrane as a helical span at residues 471–491 (GVLNISIVIPQVVIALGAGPW). The Extracellular segment spans residues 492 to 499 (DELFGKGN). The helical transmembrane segment at 500–520 (IPAFGLASGFALIGGVAGIFL) threads the bilayer. Residues 521-538 (LPKISKRQFRSVSMGGGH) lie on the Cytoplasmic side of the membrane.

It belongs to the glycoside-pentoside-hexuronide (GPH) cation symporter transporter (TC 2.A.2.4) family. Homodimer.

It localises to the cell membrane. It functions in the pathway glycan biosynthesis; sucrose metabolism. Its function is as follows. Responsible for the transport of sucrose into the cell, with the concomitant uptake of protons (symport system). May also transport other glucosides. May be required for apoplastic phloem sucrose loading in source tissues (e.g. leaves) in order to transport it to sink tissues (e.g. roots, flowers). In Oryza sativa subsp. indica (Rice), this protein is Sucrose transport protein SUT1 (SUT1).